The sequence spans 341 residues: DNA-directed RNA polymerase subunit alpha (341 aa).

Residues 1–237 (MLSLSKNWNA…EQLQLFISFE (237 aa)) form an alpha N-terminal domain (alpha-NTD) region. Residues 247-341 (TDALPFSPYL…LSKRYEDSYN (95 aa)) are alpha C-terminal domain (alpha-CTD).

The protein belongs to the RNA polymerase alpha chain family. Homodimer. The RNAP catalytic core consists of 2 alpha, 1 beta, 1 beta' and 1 omega subunit. When a sigma factor is associated with the core the holoenzyme is formed, which can initiate transcription.

It carries out the reaction RNA(n) + a ribonucleoside 5'-triphosphate = RNA(n+1) + diphosphate. In terms of biological role, DNA-dependent RNA polymerase catalyzes the transcription of DNA into RNA using the four ribonucleoside triphosphates as substrates. In Rickettsia bellii (strain RML369-C), this protein is DNA-directed RNA polymerase subunit alpha.